Reading from the N-terminus, the 361-residue chain is Nicotinate-nucleotide--dimethylbenzimidazole phosphoribosyltransferase (361 aa).

Glutamate 315 (proton acceptor) is an active-site residue.

This sequence belongs to the CobT family.

It carries out the reaction 5,6-dimethylbenzimidazole + nicotinate beta-D-ribonucleotide = alpha-ribazole 5'-phosphate + nicotinate + H(+). It participates in nucleoside biosynthesis; alpha-ribazole biosynthesis; alpha-ribazole from 5,6-dimethylbenzimidazole: step 1/2. Catalyzes the synthesis of alpha-ribazole-5'-phosphate from nicotinate mononucleotide (NAMN) and 5,6-dimethylbenzimidazole (DMB). The protein is Nicotinate-nucleotide--dimethylbenzimidazole phosphoribosyltransferase of Clostridium perfringens (strain ATCC 13124 / DSM 756 / JCM 1290 / NCIMB 6125 / NCTC 8237 / Type A).